Here is a 591-residue protein sequence, read N- to C-terminus: 5'-nucleotidase domain-containing protein DDB_G0275467 (591 aa).

2 stretches are compositionally biased toward low complexity: residues 38-50 (STTTTSGIKSYST) and 68-78 (QHQQQQPQQHQ). The tract at residues 38 to 88 (STTTTSGIKSYSTHNRSNNDTHTSKSNTIDQHQQQQPQQHQNNDNKHLFTP) is disordered. Asp-165 serves as the catalytic Nucleophile. Mg(2+)-binding residues include Asp-165 and Asp-167. Asp-167 serves as the catalytic Proton donor. 305 to 313 (TAAVGKVHL) contacts substrate. Mg(2+) is bound at residue Asp-450.

The protein belongs to the 5'(3')-deoxyribonucleotidase family. Requires Mg(2+) as cofactor.

This chain is 5'-nucleotidase domain-containing protein DDB_G0275467, found in Dictyostelium discoideum (Social amoeba).